Consider the following 152-residue polypeptide: Putative pre-16S rRNA nuclease (152 aa).

The protein belongs to the YqgF nuclease family.

The protein resides in the cytoplasm. In terms of biological role, could be a nuclease involved in processing of the 5'-end of pre-16S rRNA. In Sphingopyxis alaskensis (strain DSM 13593 / LMG 18877 / RB2256) (Sphingomonas alaskensis), this protein is Putative pre-16S rRNA nuclease.